Consider the following 409-residue polypeptide: All trans-polyprenyl-diphosphate synthase PDSS1 (409 aa).

Residues K128, R131, and H167 each contribute to the isopentenyl diphosphate site. Mg(2+) contacts are provided by D174 and D178. Isopentenyl diphosphate is bound at residue R184.

Belongs to the FPP/GGPP synthase family. In terms of assembly, heterotetramer composed of 2 PDSS1/DPS1 and 2 PDSS2/DLP1 subunits. Requires Mg(2+) as cofactor.

The protein resides in the mitochondrion. The enzyme catalyses 7 isopentenyl diphosphate + (2E,6E)-farnesyl diphosphate = all-trans-decaprenyl diphosphate + 7 diphosphate. It catalyses the reaction 6 isopentenyl diphosphate + (2E,6E)-farnesyl diphosphate = all-trans-nonaprenyl diphosphate + 6 diphosphate. The protein operates within cofactor biosynthesis; ubiquinone biosynthesis. Functionally, heterotetrameric enzyme that catalyzes the condensation of farnesyl diphosphate (FPP), which acts as a primer, and isopentenyl diphosphate (IPP) to produce prenyl diphosphates of varying chain lengths and participates in the determination of the side chain of ubiquinone. Supplies nona and decaprenyl diphosphate, the precursors for the side chain of the isoprenoid quinones ubiquinone-9 (Q9)and ubiquinone-10 (Q10) respectively. The enzyme adds isopentenyl diphosphate molecules sequentially to farnesyl diphosphate with trans stereochemistry. The polypeptide is All trans-polyprenyl-diphosphate synthase PDSS1 (Mus musculus (Mouse)).